The primary structure comprises 191 residues: NF-kappa-B inhibitor-interacting Ras-like protein 2 (191 aa).

A small GTPase-like region spans residues 1–191 (MGKSCKVVVC…KNKGSGSLDG (191 aa)). 11–18 (GQASVGKT) is a binding site for GTP. The Effector region signature appears at 35-43 (MIETQEDIY). GTP is bound by residues 61 to 65 (DTRGL) and 120 to 123 (NKCD). Residues 169–191 (TQPQSKSAFPLSRKNKGSGSLDG) are disordered.

The protein belongs to the small GTPase superfamily. Ras family. KappaB-Ras subfamily. As to quaternary structure, interacts with both NF-kappa-B inhibitor alpha (NFKBIA) and beta (NFKBIB) in vitro. However, it probably only interacts with NFKBIB in vivo. Interacts with GFOD1.

It is found in the cytoplasm. Its function is as follows. Atypical Ras-like protein that acts as a potent regulator of NF-kappa-B activity by preventing the degradation of NF-kappa-B inhibitor beta (NFKBIB) by most signals, explaining why NFKBIB is more resistant to degradation. May act by blocking phosphorylation of NFKBIB and nuclear localization of p65/RELA NF-kappa-B subunit. It is unclear whether it acts as a GTPase. Both GTP- and GDP-bound forms block phosphorylation of NFKBIB. The protein is NF-kappa-B inhibitor-interacting Ras-like protein 2 (Nkiras2) of Mus musculus (Mouse).